Here is a 512-residue protein sequence, read N- to C-terminus: MGIQAAEISAILKEQIKNFGQQAEVAEVGRVLSVGDGIARVHGLDNVQAGEMVEFPGGIRGMALNLEVDNVGVVIFGDDRSIKEGDTVKRTKSIVDVPAGDALLGRVVDGLGNPIDGKGPIAATERRVADVKAPGIIPRKGVHEPMATGLKSVDAMIPIGRGQRELIIGDRQTGKTAIALDTILNQKSYNEAAGDDESKKLYCIYVAIGQKRSTVAQLVKKLEETGAIDYTLVVAATASDPAPMQFLAPYAATAMAEYFRDNGRHALIIYDDLSKQAVAYRQMSLLLRRPPGREAYPGDVFYLHSRLLERSAKLNKDHGAGSLTALPIIETQGGDVSAFIPTNVISITDGQIFLETELFYQGIRPAVNTGLSVSRVGSSAQTDAMKSVAGPVKLELAQYREMAAFAQFGSDLDAATQQLLNRGARLTELMKQPQYAPLTNAEIVCVIFAGTKGYLDKVPVKDVGRWEQGLLKHLRTNAKDLLADITNNDRKVKGELEDKIRAALDTYAKDFA.

An ATP-binding site is contributed by glycine 169–threonine 176.

It belongs to the ATPase alpha/beta chains family. F-type ATPases have 2 components, CF(1) - the catalytic core - and CF(0) - the membrane proton channel. CF(1) has five subunits: alpha(3), beta(3), gamma(1), delta(1), epsilon(1). CF(0) has four main subunits: a(1), b(1), b'(1) and c(9-12).

Its subcellular location is the cell inner membrane. It carries out the reaction ATP + H2O + 4 H(+)(in) = ADP + phosphate + 5 H(+)(out). Its function is as follows. Produces ATP from ADP in the presence of a proton gradient across the membrane. The alpha chain is a regulatory subunit. This Cereibacter sphaeroides (strain ATCC 17029 / ATH 2.4.9) (Rhodobacter sphaeroides) protein is ATP synthase subunit alpha 1.